Consider the following 274-residue polypeptide: Large ribosomal subunit protein uL2cz/uL2cy (274 aa).

Disordered stretches follow at residues 1–23 and 223–274; these read MAIH…SQVK and MNPV…RRSK.

Belongs to the universal ribosomal protein uL2 family. Part of the 50S ribosomal subunit.

The protein localises to the plastid. Its subcellular location is the chloroplast. This Ranunculus macranthus (Large buttercup) protein is Large ribosomal subunit protein uL2cz/uL2cy (rpl2-A).